We begin with the raw amino-acid sequence, 531 residues long: NADH-quinone oxidoreductase subunit N (531 aa).

14 helical membrane passes run 8 to 28 (VEYF…AGVL), 41 to 61 (AQVT…IVVA), 81 to 101 (ATLF…VFMA), 146 to 166 (GATQ…MMVF), 172 to 192 (LLTM…MCGL), 208 to 228 (FLLG…LYGA), 250 to 270 (ALAG…AVPF), 282 to 302 (PTPI…GALL), 318 to 338 (PVLW…AVNQ), 350 to 370 (VAHV…GLSA), 372 to 392 (LFYL…VGLV), 418 to 438 (IVGV…LTSG), 453 to 473 (GAVP…YFYV), and 500 to 520 (AAIA…QPVL).

It belongs to the complex I subunit 2 family. NDH-1 is composed of 14 different subunits. Subunits NuoA, H, J, K, L, M, N constitute the membrane sector of the complex.

It is found in the cell membrane. It catalyses the reaction a quinone + NADH + 5 H(+)(in) = a quinol + NAD(+) + 4 H(+)(out). Functionally, NDH-1 shuttles electrons from NADH, via FMN and iron-sulfur (Fe-S) centers, to quinones in the respiratory chain. The immediate electron acceptor for the enzyme in this species is believed to be a menaquinone. Couples the redox reaction to proton translocation (for every two electrons transferred, four hydrogen ions are translocated across the cytoplasmic membrane), and thus conserves the redox energy in a proton gradient. This Mycobacterium tuberculosis (strain CDC 1551 / Oshkosh) protein is NADH-quinone oxidoreductase subunit N.